Here is a 206-residue protein sequence, read N- to C-terminus: Peroxynitrite isomerase (206 aa).

Positions 21 to 27 match the GXWXGXG motif; that stretch reads GTWEGNG. Position 190 (histidine 190) interacts with heme b.

It belongs to the nitrobindin family. Homodimer. Requires heme b as cofactor.

The catalysed reaction is peroxynitrite = nitrate. The protein operates within nitrogen metabolism. In terms of biological role, heme-binding protein able to scavenge peroxynitrite and to protect free L-tyrosine against peroxynitrite-mediated nitration, by acting as a peroxynitrite isomerase that converts peroxynitrite to nitrate. Therefore, this protein likely plays a role in peroxynitrite sensing and in the detoxification of reactive nitrogen and oxygen species (RNS and ROS, respectively). Is able to bind nitric oxide (NO) in vitro, but may act as a sensor of peroxynitrite levels in vivo. In Kocuria rhizophila (strain ATCC 9341 / DSM 348 / NBRC 103217 / DC2201), this protein is Peroxynitrite isomerase.